Reading from the N-terminus, the 266-residue chain is Putative carbamate hydrolase RutD (266 aa).

This sequence belongs to the AB hydrolase superfamily. Hydrolase RutD family.

The enzyme catalyses carbamate + 2 H(+) = NH4(+) + CO2. Functionally, involved in pyrimidine catabolism. May facilitate the hydrolysis of carbamate, a reaction that can also occur spontaneously. This is Putative carbamate hydrolase RutD from Escherichia coli O139:H28 (strain E24377A / ETEC).